A 921-amino-acid chain; its full sequence is Retinoblastoma-associated protein (921 aa).

The disordered stretch occupies residues 1–36 (MPPKAPRRAAAAEPPPPPPPPPREDDPAQDSGPEEL). Residue proline 2 is modified to N,N-dimethylproline; by NTM1. 2 positions are modified to phosphoserine: serine 31 and serine 243. Residues threonine 246, threonine 350, threonine 364, and threonine 367 each carry the phosphothreonine modification. The tract at residues 341-360 (PIDSFETERTPRKNNPDEEA) is disordered. The segment covering 346–356 (ETERTPRKNNP) has biased composition (basic and acidic residues). Positions 367–573 (TPVRTVMNTI…FDLIKQSKDG (207 aa)) are domain A. Positions 367 to 764 (TPVRTVMNTI…QRLKTNILQY (398 aa)) are pocket; binds T and E1A. A Phosphoserine; by CDK2 modification is found at serine 561. The spacer stretch occupies residues 574–632 (EGPDNLEPACPLSLPLQGNHTAADMYLSPLRSPKKRTSTTRVNSAANTETQAASAFHTQ). Serine 601, serine 605, and serine 617 each carry phosphoserine. The tract at residues 633–764 (KPLKSTSLAL…QRLKTNILQY (132 aa)) is domain B. The tract at residues 756 to 921 (RLKTNILQYA…SKDVSNKEEK (166 aa)) is interaction with LIMD1. The domain; mediates interaction with E4F1 stretch occupies residues 764-921 (YASTRPPTLS…SKDVSNKEEK (158 aa)). Phosphoserine occurs at positions 773, 781, 788, and 800. Lysine 803 is modified (N6-methyllysine; by SMYD2). At serine 804 the chain carries Phosphoserine. Phosphothreonine occurs at positions 814, 816, 819, and 834. Serine 848 bears the Phosphoserine mark. Lysine 853 is modified (N6-methyllysine; by SMYD2). Positions 853–869 (KRSAEGGNPPKPLKKLR) match the Bipartite nuclear localization signal motif. Lysine 866 and lysine 867 each carry N6-acetyllysine; by PCAF. Residues 872–921 (IEGADEADGSKHLPAESKFQQKLAEMTSTRTRMQKQRMNESKDVSNKEEK) are disordered. The segment covering 908–921 (RMNESKDVSNKEEK) has biased composition (basic and acidic residues).

Belongs to the retinoblastoma protein (RB) family. The hypophosphorylated form interacts with and sequesters the E2F1 transcription factor, thereby inhibiting E2F1 transcription. Interacts with heterodimeric E2F/DP transcription factor complexes containing TFDP1 and either E2F1/E2F, E2F3, E2F4 or E2F5, or TFDP2 and E2F4. Interacts (when hyperphosphorylated and hypophosphorylated) with PKP3; the interaction inhibits RB1 interaction with and repression of the transcription factor E2F1, potentially via sequestering RB1 to the cytoplasm. The unphosphorylated form interacts with EID1, ARID3B, KDM5A, SUV39H1, MJD2A/JHDM3A and THOC1. Interacts with the N-terminal domain of TAF1. Interacts with SNW1, ATAD5, AATF, DNMT1, LIN9, LMNA, KMT5B, KMT5C, PELP1, UHRF2, TMPO-alpha and USP4. Interacts with GRIP1 and UBR4. Interacts with ARID4A and KDM5B. Interacts with E4F1 and LIMD1. Interacts with SMARCA4/BRG1 and HDAC1. Interacts with USP4. Interacts (when methylated at Lys-853) with L3MBTL1. Binds to CDK1 and CDK2. Interacts with CHEK2; phosphorylates RB1. Interacts with PRMT2. Interacts with CEBPA. P-TEFB complex interacts with RB1; promotes phosphorylation of RB1. Interacts with RBBP9; the interaction disrupts RB1 binding to E2F1. Interacts with KAT2B/PCAF and EP300/P300. Interacts with PAX5. Interacts (phosphorylated and unphosphorylated) with BLCAP. May interact with NDC80. In terms of assembly, (Microbial infection) Interacts with adenovirus E1a protein. As to quaternary structure, (Microbial infection) Interacts with SV40 large T antigen. In terms of processing, phosphorylated. Phosphorylated by CDK6 and CDK4, and subsequently by CDK2 at Ser-561 in G1, thereby releasing E2F1 which is then able to activate cell growth. Dephosphorylated at the late M phase. Phosphorylation of threonine residues in domain C promotes interaction between the C-terminal domain C and the Pocket domain, and thereby inhibits interactions with heterodimeric E2F/DP transcription factor complexes. Dephosphorylated at Ser-788 by calcineruin upon calcium stimulation. CDK3/cyclin-C-mediated phosphorylation at Ser-800 and Ser-804 is required for G0-G1 transition. Phosphorylated by CDK1 and CDK2 upon TGFB1-mediated apoptosis. Post-translationally, monomethylation at Lys-803 by SMYD2 enhances phosphorylation at Ser-800 and Ser-804, and promotes cell cycle progression. Monomethylation at Lys-853 by SMYD2 promotes interaction with L3MBTL1. N-terminus is methylated by METTL11A/NTM1. Acetylated in the skin. Acetylation at Lys-866 and Lys-867 regulates subcellular localization during keratinocytes differentiation. In terms of tissue distribution, expressed in the cell nuclei of renal tubules, hepatocytes and skeletal muscles. Expressed in skin (at protein level).

The protein localises to the nucleus. It localises to the cytoplasm. In terms of biological role, tumor suppressor that is a key regulator of the G1/S transition of the cell cycle. The hypophosphorylated form binds transcription regulators of the E2F family, preventing transcription of E2F-responsive genes. Both physically blocks E2Fs transactivating domain and recruits chromatin-modifying enzymes that actively repress transcription. Cyclin and CDK-dependent phosphorylation of RB1 induces its dissociation from E2Fs, thereby activating transcription of E2F responsive genes and triggering entry into S phase. RB1 also promotes the G0-G1 transition upon phosphorylation and activation by CDK3/cyclin-C. Directly involved in heterochromatin formation by maintaining overall chromatin structure and, in particular, that of constitutive heterochromatin by stabilizing histone methylation. Recruits and targets histone methyltransferases SUV39H1, KMT5B and KMT5C, leading to epigenetic transcriptional repression. Controls histone H4 'Lys-20' trimethylation. Inhibits the intrinsic kinase activity of TAF1. Mediates transcriptional repression by SMARCA4/BRG1 by recruiting a histone deacetylase (HDAC) complex to the c-FOS promoter. In resting neurons, transcription of the c-FOS promoter is inhibited by BRG1-dependent recruitment of a phospho-RB1-HDAC1 repressor complex. Upon calcium influx, RB1 is dephosphorylated by calcineurin, which leads to release of the repressor complex. The protein is Retinoblastoma-associated protein (Rb1) of Mus musculus (Mouse).